Consider the following 627-residue polypeptide: Glutamine--fructose-6-phosphate aminotransferase [isomerizing] (627 aa).

Cysteine 2 functions as the Nucleophile; for GATase activity in the catalytic mechanism. Residues cysteine 2–leucine 224 form the Glutamine amidotransferase type-2 domain. SIS domains lie at leucine 293–threonine 442 and leucine 476–proline 617. Catalysis depends on lysine 622, which acts as the For Fru-6P isomerization activity.

As to quaternary structure, homodimer.

The protein resides in the cytoplasm. The catalysed reaction is D-fructose 6-phosphate + L-glutamine = D-glucosamine 6-phosphate + L-glutamate. Its function is as follows. Catalyzes the first step in hexosamine metabolism, converting fructose-6P into glucosamine-6P using glutamine as a nitrogen source. This chain is Glutamine--fructose-6-phosphate aminotransferase [isomerizing], found in Nostoc sp. (strain PCC 9229).